A 418-amino-acid polypeptide reads, in one-letter code: Tryptophan synthase beta chain (418 aa).

The segment covering 1 to 12 has biased composition (polar residues); the sequence is MTSTLPTANTPD. Residues 1 to 21 are disordered; that stretch reads MTSTLPTANTPDPASLMPSVR. Residue Lys111 is modified to N6-(pyridoxal phosphate)lysine.

Belongs to the TrpB family. In terms of assembly, tetramer of two alpha and two beta chains. Pyridoxal 5'-phosphate is required as a cofactor.

It carries out the reaction (1S,2R)-1-C-(indol-3-yl)glycerol 3-phosphate + L-serine = D-glyceraldehyde 3-phosphate + L-tryptophan + H2O. It functions in the pathway amino-acid biosynthesis; L-tryptophan biosynthesis; L-tryptophan from chorismate: step 5/5. Functionally, the beta subunit is responsible for the synthesis of L-tryptophan from indole and L-serine. This chain is Tryptophan synthase beta chain, found in Synechococcus sp. (strain CC9311).